The following is a 294-amino-acid chain: N-acetylmuramic acid 6-phosphate etherase (294 aa).

One can recognise an SIS domain in the interval 54-217 (VIQSFEEEGR…STASMIGVGK (164 aa)). Glutamate 82 acts as the Proton donor in catalysis. The active site involves glutamate 113.

This sequence belongs to the GCKR-like family. MurNAc-6-P etherase subfamily. In terms of assembly, homodimer.

The catalysed reaction is N-acetyl-D-muramate 6-phosphate + H2O = N-acetyl-D-glucosamine 6-phosphate + (R)-lactate. Its pathway is amino-sugar metabolism; N-acetylmuramate degradation. In terms of biological role, specifically catalyzes the cleavage of the D-lactyl ether substituent of MurNAc 6-phosphate, producing GlcNAc 6-phosphate and D-lactate. This chain is N-acetylmuramic acid 6-phosphate etherase, found in Bacillus cereus (strain ZK / E33L).